A 930-amino-acid polypeptide reads, in one-letter code: Dual serine/threonine and tyrosine protein kinase (930 aa).

Residues 383–428 (RKENELYESLMNIANRKQEEMKDMIIETLSNMKEELLEDAANMEFK) adopt a coiled-coil conformation. Positions 653 to 907 (PKLGRELGRG…PLLGIVQPML (255 aa)) constitute a Protein kinase domain. ATP contacts are provided by residues 659–667 (LGRGQYGVV) and lysine 682. Residue aspartate 778 is the Proton acceptor of the active site.

This sequence belongs to the protein kinase superfamily. Ser/Thr protein kinase family. In terms of tissue distribution, widely expressed with the highest expression in brain and ovary.

It localises to the cytoplasm. The protein localises to the cell membrane. It is found in the apical cell membrane. The protein resides in the basolateral cell membrane. Its subcellular location is the cell junction. The enzyme catalyses L-seryl-[protein] + ATP = O-phospho-L-seryl-[protein] + ADP + H(+). It catalyses the reaction L-threonyl-[protein] + ATP = O-phospho-L-threonyl-[protein] + ADP + H(+). The catalysed reaction is L-tyrosyl-[protein] + ATP = O-phospho-L-tyrosyl-[protein] + ADP + H(+). May act as a positive regulator of ERK phosphorylation downstream of fibroblast growth factor-receptor activation. May induce both caspase-dependent apoptosis and caspase-independent cell death. The protein is Dual serine/threonine and tyrosine protein kinase (DSTYK) of Gallus gallus (Chicken).